Reading from the N-terminus, the 427-residue chain is Glutamate-1-semialdehyde 2,1-aminomutase (427 aa).

K265 is modified (N6-(pyridoxal phosphate)lysine).

Belongs to the class-III pyridoxal-phosphate-dependent aminotransferase family. HemL subfamily. As to quaternary structure, homodimer. Pyridoxal 5'-phosphate is required as a cofactor.

It is found in the cytoplasm. It catalyses the reaction (S)-4-amino-5-oxopentanoate = 5-aminolevulinate. The protein operates within porphyrin-containing compound metabolism; protoporphyrin-IX biosynthesis; 5-aminolevulinate from L-glutamyl-tRNA(Glu): step 2/2. The chain is Glutamate-1-semialdehyde 2,1-aminomutase from Paraburkholderia phytofirmans (strain DSM 17436 / LMG 22146 / PsJN) (Burkholderia phytofirmans).